The following is a 267-amino-acid chain: Diphthine--ammonia ligase (267 aa).

Tyr97 carries the phosphotyrosine modification.

Belongs to the Diphthine--ammonia ligase family.

The enzyme catalyses diphthine-[translation elongation factor 2] + NH4(+) + ATP = diphthamide-[translation elongation factor 2] + AMP + diphosphate + H(+). The protein operates within protein modification; peptidyl-diphthamide biosynthesis. Its function is as follows. Amidase that catalyzes the last step of diphthamide biosynthesis using ammonium and ATP. Diphthamide biosynthesis consists in the conversion of an L-histidine residue in the translation elongation factor eEF-2 (EEF2) to diphthamide. This is Diphthine--ammonia ligase (Dph6) from Rattus norvegicus (Rat).